The following is a 118-amino-acid chain: V-type proton ATPase subunit G 1 (118 aa).

The residue at position 2 (alanine 2) is an N-acetylalanine. The disordered stretch occupies residues 19 to 42 (AEKVSEARKRKNRRLKQAKEEAQA).

The protein belongs to the V-ATPase G subunit family. In terms of assembly, V-ATPase is a heteromultimeric enzyme made up of two complexes: the ATP-hydrolytic V1 complex and the proton translocation V0 complex. The V1 complex consists of three catalytic AB heterodimers that form a heterohexamer, three peripheral stalks each consisting of EG heterodimers, one central rotor including subunits D and F, and the regulatory subunits C and H. The proton translocation complex V0 consists of the proton transport subunit a, a ring of proteolipid subunits c9c'', rotary subunit d, subunits e and f, and the accessory subunits ATP6AP1/Ac45 and ATP6AP2/PRR. As to expression, brain, heart, kidney and spleen.

Its subcellular location is the apical cell membrane. Its function is as follows. Subunit of the V1 complex of vacuolar(H+)-ATPase (V-ATPase), a multisubunit enzyme composed of a peripheral complex (V1) that hydrolyzes ATP and a membrane integral complex (V0) that translocates protons. V-ATPase is responsible for acidifying and maintaining the pH of intracellular compartments and in some cell types, is targeted to the plasma membrane, where it is responsible for acidifying the extracellular environment. In aerobic conditions, involved in intracellular iron homeostasis, thus triggering the activity of Fe(2+) prolyl hydroxylase (PHD) enzymes, and leading to HIF1A hydroxylation and subsequent proteasomal degradation. This is V-type proton ATPase subunit G 1 (ATP6V1G1) from Bos taurus (Bovine).